Consider the following 197-residue polypeptide: RILP-like protein 2 (197 aa).

A disordered region spans residues 1 to 24 (MEDHPVREEEDGEEDEGALAKSPL). Residues 8-17 (EEEDGEEDEG) are compositionally biased toward acidic residues. In terms of domain architecture, RH1 spans 14–96 (EDEGALAKSP…KQEVEGLRKA (83 aa)). A coiled-coil region spans residues 69 to 153 (VNEGSLAVEE…VQEELQCYRS (85 aa)). The RH2 domain maps to 119 to 184 (RPRFTLQELR…GNGEKEERTI (66 aa)).

Belongs to the RILPL family. As to quaternary structure, homodimer. Interacts with RAC1. Interacts (via N-terminus) with MYO5A, the interaction is required for its role in dendrite formation. Interacts with RAB8A; interaction is dependent on the phosphorylation of RAB8A on 'Thr-72'. Interacts with RAB10 and RAB12; interaction is dependent on the phosphorylation of 'Thr-73' on RAB10 and 'Ser-105' on RAB12.

The protein resides in the cytoplasm. It is found in the cytosol. The protein localises to the cytoskeleton. Its subcellular location is the microtubule organizing center. It localises to the centrosome. The protein resides in the cell projection. It is found in the cilium. Functionally, involved in cell shape and neuronal morphogenesis, positively regulating the establishment and maintenance of dendritic spines. Plays a role in cellular protein transport, including protein transport away from primary cilia. May function via activation of RAC1 and PAK1. This chain is RILP-like protein 2 (Rilpl2), found in Mus musculus (Mouse).